A 261-amino-acid polypeptide reads, in one-letter code: Flagellar L-ring protein (261 aa).

A signal peptide spans Met1–Gly15. Cys16 carries N-palmitoyl cysteine lipidation. A lipid anchor (S-diacylglycerol cysteine) is attached at Cys16. Residues Lys121 to Ser133 are compositionally biased toward basic and acidic residues. The segment at Lys121 to Val140 is disordered.

The protein belongs to the FlgH family. As to quaternary structure, the basal body constitutes a major portion of the flagellar organelle and consists of four rings (L,P,S, and M) mounted on a central rod.

The protein resides in the cell outer membrane. It is found in the bacterial flagellum basal body. Functionally, assembles around the rod to form the L-ring and probably protects the motor/basal body from shearing forces during rotation. The protein is Flagellar L-ring protein of Aliivibrio salmonicida (strain LFI1238) (Vibrio salmonicida (strain LFI1238)).